The sequence spans 123 residues: Signal recognition particle 14 kDa protein (123 aa).

Residues 99–123 form a disordered region; sequence KKKPTPTTTPSSSTTAKTAAKKTKV. The segment covering 103–116 has biased composition (low complexity); that stretch reads TPTTTPSSSTTAKT.

The protein belongs to the SRP14 family. As to quaternary structure, heterodimer with srp9; binds RNA as heterodimer. Component of a signal recognition particle (SRP) complex that consists of a 7SL RNA molecule and six protein subunits: srp72, srp68, srp54, srp19, srp14 and srp9.

The protein resides in the cytoplasm. Its function is as follows. Component of the signal recognition particle (SRP) complex, a ribonucleoprotein complex that mediates the cotranslational targeting of secretory and membrane proteins to the endoplasmic reticulum (ER). Srp9 together with srp14 and the Alu portion of the SRP RNA, constitutes the elongation arrest domain of SRP. The complex of srp9 and srp14 is required for SRP RNA binding. This is Signal recognition particle 14 kDa protein (srp14-1) from Dictyostelium discoideum (Social amoeba).